Reading from the N-terminus, the 336-residue chain is UDP-N-acetylenolpyruvoylglucosamine reductase (336 aa).

The FAD-binding PCMH-type domain occupies 17–188 (GFDVRARYAS…TAVTLRLSRD (172 aa)). R164 is an active-site residue. S236 serves as the catalytic Proton donor. Residue E332 is part of the active site.

This sequence belongs to the MurB family. Requires FAD as cofactor.

Its subcellular location is the cytoplasm. It carries out the reaction UDP-N-acetyl-alpha-D-muramate + NADP(+) = UDP-N-acetyl-3-O-(1-carboxyvinyl)-alpha-D-glucosamine + NADPH + H(+). Its pathway is cell wall biogenesis; peptidoglycan biosynthesis. Cell wall formation. This is UDP-N-acetylenolpyruvoylglucosamine reductase from Cupriavidus pinatubonensis (strain JMP 134 / LMG 1197) (Cupriavidus necator (strain JMP 134)).